Consider the following 636-residue polypeptide: Putative cysteine-rich receptor-like protein kinase 33 (636 aa).

An N-terminal signal peptide occupies residues 1–25; sequence MRKTKKISFLIFWVVLISIIGAISS. 2 consecutive Gnk2-homologous domains span residues 26 to 128 and 138 to 245; these read QQCN…NSSF and YMEH…LYPF. Residues 26–266 are Extracellular-facing; the sequence is QQCNETGYFE…PGSKRNISVG (241 aa). 10 N-linked (GlcNAc...) asparagine glycosylation sites follow: Asn29, Asn63, Asn105, Asn125, Asn149, Asn173, Asn185, Asn188, Asn250, and Asn262. Residues 267 to 287 traverse the membrane as a helical segment; that stretch reads FFVAIVVATGVVISVLSTLVV. At 288-636 the chain is on the cytoplasmic side; that stretch reads VLVCRKRKTD…DSLIDDLVPR (349 aa). One can recognise a Protein kinase domain in the interval 321-600; the sequence is FSKCNMLGQG…MMLTSNSITL (280 aa). ATP contacts are provided by residues 327–335 and Lys349; that span reads LGQGGFGEV. Tyr394 is subject to Phosphotyrosine. The active-site Proton acceptor is the Asp446. Residue Ser450 is modified to Phosphoserine. Thr486 is subject to Phosphothreonine. Tyr494 carries the phosphotyrosine modification.

This sequence belongs to the protein kinase superfamily. Ser/Thr protein kinase family. CRK subfamily.

The protein localises to the membrane. It carries out the reaction L-seryl-[protein] + ATP = O-phospho-L-seryl-[protein] + ADP + H(+). It catalyses the reaction L-threonyl-[protein] + ATP = O-phospho-L-threonyl-[protein] + ADP + H(+). This is Putative cysteine-rich receptor-like protein kinase 33 (CRK33) from Arabidopsis thaliana (Mouse-ear cress).